Consider the following 166-residue polypeptide: RNA pyrophosphohydrolase (166 aa).

A Nudix hydrolase domain is found at 6–149; sequence GFRPNVGIIL…KRDVYRKAMM (144 aa). Residues 38-59 carry the Nudix box motif; the sequence is GGIHFGETPEQALYRELREEVG.

This sequence belongs to the Nudix hydrolase family. RppH subfamily. A divalent metal cation is required as a cofactor.

Functionally, accelerates the degradation of transcripts by removing pyrophosphate from the 5'-end of triphosphorylated RNA, leading to a more labile monophosphorylated state that can stimulate subsequent ribonuclease cleavage. The chain is RNA pyrophosphohydrolase from Acinetobacter baylyi (strain ATCC 33305 / BD413 / ADP1).